The sequence spans 831 residues: Probable inactive serine/threonine-protein kinase DDB_G0274613 (831 aa).

Residues 9-63 (CSICSEEVIDFAAIFSSNKKFGDKACKHNFCVSCLTYLMEYNTRNKKALCCPICR) form an RING-type zinc finger. A coiled-coil region spans residues 83–348 (RKLSSAQIFL…LEEMKLLYQF (266 aa)). The 374-residue stretch at 414–787 (QIHKVSIGNG…ANQAAFHKFF (374 aa)) folds into the Protein kinase domain. Positions 657–703 (NNNNNNNNNNNNNNNNNNNNNNNNNNNNNNNNNNNNNNNNNIESNFN) are disordered.

The protein belongs to the protein kinase superfamily. CMGC Ser/Thr protein kinase family.

This Dictyostelium discoideum (Social amoeba) protein is Probable inactive serine/threonine-protein kinase DDB_G0274613.